A 181-amino-acid chain; its full sequence is ADP-ribosylation factor 3 (181 aa).

Gly2 is lipidated: N-myristoyl glycine. GTP is bound by residues Gly24–Thr31, Asp67–Gln71, and Asn126–Asp129.

This sequence belongs to the small GTPase superfamily. Arf family. Interacts with PRKCABP. Interacts with PI4KB and NCS1/FREQ at the Golgi complex.

The protein resides in the golgi apparatus. It localises to the cytoplasm. The protein localises to the perinuclear region. Its function is as follows. GTP-binding protein that functions as an allosteric activator of the cholera toxin catalytic subunit, an ADP-ribosyltransferase. Involved in protein trafficking; may modulate vesicle budding and uncoating within the Golgi apparatus. In Bos taurus (Bovine), this protein is ADP-ribosylation factor 3 (ARF3).